A 547-amino-acid chain; its full sequence is Chaperonin GroEL 2 (547 aa).

ATP-binding positions include 29 to 32, 86 to 90, Gly-418, 482 to 484, and Asp-498; these read TLGP, DGTTT, and NAA.

The protein belongs to the chaperonin (HSP60) family. As to quaternary structure, forms a cylinder of 14 subunits composed of two heptameric rings stacked back-to-back. Interacts with the co-chaperonin GroES.

The protein resides in the cytoplasm. The enzyme catalyses ATP + H2O + a folded polypeptide = ADP + phosphate + an unfolded polypeptide.. In terms of biological role, together with its co-chaperonin GroES, plays an essential role in assisting protein folding. The GroEL-GroES system forms a nano-cage that allows encapsulation of the non-native substrate proteins and provides a physical environment optimized to promote and accelerate protein folding. This Corynebacterium efficiens (strain DSM 44549 / YS-314 / AJ 12310 / JCM 11189 / NBRC 100395) protein is Chaperonin GroEL 2.